The sequence spans 361 residues: Replication factor C subunit 3 (361 aa).

Over residues 1 to 28 the composition is skewed to low complexity; that stretch reads MAGATAATPMDIDAAAPPPGAAAKGKAP. The interval 1 to 39 is disordered; that stretch reads MAGATAATPMDIDAAAPPPGAAAKGKAPLSSTPGGRAAP. Position 77-84 (77-84) interacts with ATP; the sequence is YGPPGTGK.

This sequence belongs to the activator 1 small subunits family. As to quaternary structure, heterotetramer of subunits RFC2, RFC3, RFC4 and RFC5 that can form a complex with RFC1. As to expression, expressed in roots, leaves, shoot apical meristem (SAM), flag leaves and panicles.

It localises to the nucleus. Functionally, may be involved in DNA replication and thus regulate cell proliferation. This Oryza sativa subsp. japonica (Rice) protein is Replication factor C subunit 3 (RFC3).